The chain runs to 345 residues: GTPase Obg (345 aa).

In terms of domain architecture, Obg spans 1 to 159 (MRFIDEASIT…FHLKLELKLL (159 aa)). Residues 160–329 (ADVGIVGLPN…LIQILARQIA (170 aa)) form the OBG-type G domain. GTP-binding positions include 166-173 (GLPNAGKS), 191-195 (FTTLT), 213-216 (DIPG), 283-286 (NKID), and 310-312 (SAA). Mg(2+) is bound by residues Ser173 and Thr193.

Belongs to the TRAFAC class OBG-HflX-like GTPase superfamily. OBG GTPase family. As to quaternary structure, monomer. It depends on Mg(2+) as a cofactor.

Its subcellular location is the cytoplasm. In terms of biological role, an essential GTPase which binds GTP, GDP and possibly (p)ppGpp with moderate affinity, with high nucleotide exchange rates and a fairly low GTP hydrolysis rate. Plays a role in control of the cell cycle, stress response, ribosome biogenesis and in those bacteria that undergo differentiation, in morphogenesis control. This is GTPase Obg from Desulforapulum autotrophicum (strain ATCC 43914 / DSM 3382 / VKM B-1955 / HRM2) (Desulfobacterium autotrophicum).